The sequence spans 598 residues: MAPRDSAEPLPPLSPQAWAWSGKFLAMGALAGFSVLSLLTYGYLCWGQDLEEEGSLKAQVDERPEAGTAGTSQPHLIFILADDQGFRDVGYHGSEIKTPTLDKLAAEGVKLENYYVQPICTPSRSQFITGKYQIHTGLQHSIIRPTQPNCLPLDNATLPQKLKEVGYSTHMVGKWHLGFYRKDCMPTKRGFDTFFGSLLGSGDYYTHYKCDSPGVCGYDLYENDNAAWDYDNGIYSTQMYTQRVQQILATHDPTKPLFLYVAYQAVHSPLQAPGRYFEHYRSIININRRRYAAMLSCLDEAIHNVTLALKRYGFYNNSIIIYSSDNGGQPTAGGSNWPLRGSKGTYWEGGIRAVGFVHSPLLKNKGTVCKELVHITDWYPTLISLAEGQIDEDIQLDGYDIWETISEGLRSPRVDILHNIDPIYTKAKNGSWAAGYGIWNTAIQSAIRVQHWKLLTGNPGYSDWVPPQAFSNLGPNRWHNERITLSTGKSIWLFNITADPYERVDLSSRYPGIVKKLLRRLSQFNKTAVPVRYPPKDPRSNPRLNGGVWGPWYKEENKKKKSNKTKAKKMQKKKSKARMRKQLAAHSSIKCHPSVATG.

Positions 1-47 (MAPRDSAEPLPPLSPQAWAWSGKFLAMGALAGFSVLSLLTYGYLCWG) are cleaved as a signal peptide. The Ca(2+) site is built by D82, D83, and C120. Residue C120 is the Nucleophile of the active site. C120 carries the post-translational modification 3-oxoalanine (Cys). The N-linked (GlcNAc...) asparagine glycan is linked to N155. K174 serves as a coordination point for substrate. Residue H176 is part of the active site. H267 is a binding site for substrate. N304 and N316 each carry an N-linked (GlcNAc...) asparagine glycan. The Ca(2+) site is built by D325 and N326. K343 lines the substrate pocket. N-linked (GlcNAc...) asparagine glycosylation is found at N429, N495, N525, and N563. The segment at 532–598 (RYPPKDPRSN…IKCHPSVATG (67 aa)) is disordered. The segment covering 559–583 (KKKSNKTKAKKMQKKKSKARMRKQL) has biased composition (basic residues).

The protein belongs to the sulfatase family. Ca(2+) serves as cofactor. In terms of processing, the conversion to 3-oxoalanine (also known as C-formylglycine, FGly), of a serine or cysteine residue in prokaryotes and of a cysteine residue in eukaryotes, is critical for catalytic activity.

Its subcellular location is the secreted. The protein is Arylsulfatase J (Arsj) of Mus musculus (Mouse).